A 249-amino-acid polypeptide reads, in one-letter code: Glucosamine-6-phosphate deaminase (249 aa).

The Proton acceptor; for enolization step role is filled by aspartate 67. The active-site For ring-opening step is the asparagine 136. The active-site Proton acceptor; for ring-opening step is the histidine 138. The active-site For ring-opening step is the glutamate 143.

This sequence belongs to the glucosamine/galactosamine-6-phosphate isomerase family. NagB subfamily.

The catalysed reaction is alpha-D-glucosamine 6-phosphate + H2O = beta-D-fructose 6-phosphate + NH4(+). It participates in amino-sugar metabolism; N-acetylneuraminate degradation; D-fructose 6-phosphate from N-acetylneuraminate: step 5/5. Its function is as follows. Catalyzes the reversible isomerization-deamination of glucosamine 6-phosphate (GlcN6P) to form fructose 6-phosphate (Fru6P) and ammonium ion. This Clostridium botulinum (strain Alaska E43 / Type E3) protein is Glucosamine-6-phosphate deaminase.